Here is a 37-residue protein sequence, read N- to C-terminus: MTTISSFPSIFVPLVGLVFPAIAMASLSLYVQKTKIF.

The chain crosses the membrane as a helical span at residues 10 to 30; the sequence is IFVPLVGLVFPAIAMASLSLY.

This sequence belongs to the PsaI family.

Its subcellular location is the plastid. It is found in the chloroplast thylakoid membrane. May help in the organization of the PsaL subunit. The protein is Photosystem I reaction center subunit VIII of Gossypium barbadense (Sea Island cotton).